Reading from the N-terminus, the 370-residue chain is Glycerophosphodiester phosphodiesterase GDPD3 (370 aa).

One can recognise a GP-PDE domain in the interval 35–322; sequence FVLMGHRGFG…DMVKDISEAI (288 aa).

This sequence belongs to the glycerophosphoryl diester phosphodiesterase family. As to expression, expressed in flowers and siliques.

The enzyme catalyses a sn-glycero-3-phosphodiester + H2O = an alcohol + sn-glycerol 3-phosphate + H(+). The chain is Glycerophosphodiester phosphodiesterase GDPD3 from Arabidopsis thaliana (Mouse-ear cress).